The chain runs to 226 residues: Thiopurine S-methyltransferase (226 aa).

The S-adenosyl-L-methionine site is built by Trp16, Met51, Glu72, and Arg131.

This sequence belongs to the class I-like SAM-binding methyltransferase superfamily. TPMT family.

It localises to the cytoplasm. The enzyme catalyses S-adenosyl-L-methionine + a thiopurine = S-adenosyl-L-homocysteine + a thiopurine S-methylether.. This is Thiopurine S-methyltransferase from Francisella tularensis subsp. novicida (strain U112).